Consider the following 290-residue polypeptide: MWKDLFVKKKKYAAIPSEPLRPEVPEGVMTKCPQCKKIMYTKELVKNLRVCLSCGYHHPMPARERIESVLDEGSFREYDAGMTSVNPLGFPGYIEKLEADRRKSGLNEAVVTGEGTLEGHPLAIAVMDSSFRMGSMGSVVGEKIARAVERAHEQRMPFLIFTASGGARMQEGVLSLMQMAKTSAALKRFSNDGGLFISVMTHPTTGGVSASFASLGDYNFAEPGALIGFAGRRVIEQTVREELPEDFQTAEFLLKHGQLDAVIHRHELKEKLAVVLAIHAGGGESGWWRN.

The CoA carboxyltransferase N-terminal domain occupies 28–290; that stretch reads VMTKCPQCKK…GGGESGWWRN (263 aa). Residues C32, C35, C51, and C54 each coordinate Zn(2+). The C4-type zinc-finger motif lies at 32–54; the sequence is CPQCKKIMYTKELVKNLRVCLSC.

It belongs to the AccD/PCCB family. In terms of assembly, acetyl-CoA carboxylase is a heterohexamer composed of biotin carboxyl carrier protein (AccB), biotin carboxylase (AccC) and two subunits each of ACCase subunit alpha (AccA) and ACCase subunit beta (AccD). Zn(2+) serves as cofactor.

Its subcellular location is the cytoplasm. It carries out the reaction N(6)-carboxybiotinyl-L-lysyl-[protein] + acetyl-CoA = N(6)-biotinyl-L-lysyl-[protein] + malonyl-CoA. It functions in the pathway lipid metabolism; malonyl-CoA biosynthesis; malonyl-CoA from acetyl-CoA: step 1/1. In terms of biological role, component of the acetyl coenzyme A carboxylase (ACC) complex. Biotin carboxylase (BC) catalyzes the carboxylation of biotin on its carrier protein (BCCP) and then the CO(2) group is transferred by the transcarboxylase to acetyl-CoA to form malonyl-CoA. The chain is Acetyl-coenzyme A carboxylase carboxyl transferase subunit beta from Geobacillus thermodenitrificans (strain NG80-2).